A 472-amino-acid polypeptide reads, in one-letter code: Argininosuccinate lyase (472 aa).

This sequence belongs to the lyase 1 family. Argininosuccinate lyase subfamily.

It localises to the cytoplasm. It catalyses the reaction 2-(N(omega)-L-arginino)succinate = fumarate + L-arginine. The protein operates within amino-acid biosynthesis; L-arginine biosynthesis; L-arginine from L-ornithine and carbamoyl phosphate: step 3/3. The sequence is that of Argininosuccinate lyase from Synechococcus sp. (strain CC9902).